Consider the following 353-residue polypeptide: Ribosome biogenesis protein BRX1 homolog (353 aa).

The segment covering methionine 1 to glycine 10 has biased composition (basic residues). Residues methionine 1–arginine 46 form a disordered region. Residues arginine 21–alanine 36 are compositionally biased toward basic and acidic residues. Positions glutamate 60–glycine 249 constitute a Brix domain. Residue lysine 160 forms a Glycyl lysine isopeptide (Lys-Gly) (interchain with G-Cter in SUMO2) linkage. The residue at position 261 (serine 261) is a Phosphoserine. N6-acetyllysine is present on lysine 276. Residues lysine 314 and lysine 322 each participate in a glycyl lysine isopeptide (Lys-Gly) (interchain with G-Cter in SUMO2) cross-link.

The protein belongs to the BRX1 family.

It localises to the nucleus. It is found in the nucleolus. In terms of biological role, required for biogenesis of the 60S ribosomal subunit. The polypeptide is Ribosome biogenesis protein BRX1 homolog (BRIX1) (Homo sapiens (Human)).